Consider the following 320-residue polypeptide: Uridine phosphorylase 2 (320 aa).

Residues glycine 66, arginine 100, and 144–147 contribute to the phosphate site; that span reads RIGT. Cysteine 95 and cysteine 102 are oxidised to a cystine. Residues 148-149 and 223-225 contribute to the uridine site; these read SG and QGR.

It belongs to the PNP/UDP phosphorylase family. Homodimer. In terms of tissue distribution, liver specific.

The catalysed reaction is uridine + phosphate = alpha-D-ribose 1-phosphate + uracil. The enzyme catalyses 2'-deoxyuridine + phosphate = 2-deoxy-alpha-D-ribose 1-phosphate + uracil. It functions in the pathway pyrimidine metabolism; UMP biosynthesis via salvage pathway; uracil from uridine (phosphorylase route): step 1/1. A conditional disulfide bridge can form within the protein that dislocates a critical phosphate-coordinating arginine Arg-100 away from the active site, disabling the enzyme. Its function is as follows. Catalyzes the reversible phosphorylytic cleavage of uridine to uracil and ribose-1-phosphate which can then be utilized as carbon and energy sources or in the rescue of pyrimidine bases for nucleotide synthesis. Shows broad substrate specificity and can also accept deoxyuridine and other analogous compounds. The sequence is that of Uridine phosphorylase 2 from Mus musculus (Mouse).